The primary structure comprises 196 residues: ATP-dependent Clp protease proteolytic subunit (196 aa).

Serine 101 (nucleophile) is an active-site residue. The active site involves histidine 126.

It belongs to the peptidase S14 family. Component of the chloroplastic Clp protease core complex.

The protein localises to the plastid. It is found in the chloroplast stroma. It catalyses the reaction Hydrolysis of proteins to small peptides in the presence of ATP and magnesium. alpha-casein is the usual test substrate. In the absence of ATP, only oligopeptides shorter than five residues are hydrolyzed (such as succinyl-Leu-Tyr-|-NHMec, and Leu-Tyr-Leu-|-Tyr-Trp, in which cleavage of the -Tyr-|-Leu- and -Tyr-|-Trp bonds also occurs).. In terms of biological role, cleaves peptides in various proteins in a process that requires ATP hydrolysis. Has a chymotrypsin-like activity. Plays a major role in the degradation of misfolded proteins. The polypeptide is ATP-dependent Clp protease proteolytic subunit (Coffea arabica (Arabian coffee)).